We begin with the raw amino-acid sequence, 2344 residues long: Mucin-4 (2344 aa).

Residues 1–30 form the signal peptide; that stretch reads MRGPHGVSWRVPWLCLSCLCSCLLLLPVNT. Over residues 32–46 the composition is skewed to low complexity; that stretch reads TTSAPKTSTALPSST. 5 disordered regions span residues 32–760, 773–1036, 1072–1130, 1171–1197, and 1233–1269; these read TTSA…QGSI, QKMS…TTST, VPSL…TPSV, STVAHRQSTQRSSTHSQSYLTESMGAS, and SGLTTKTDNDRSTALSATSLTLPAPSTSTASRSTVPP. A compositionally biased stretch (polar residues) spans 47–100; the sequence is NPSQMTSQVSNPTASSYRMTKNTGQASPMVTSSSITTLPQSQHTGSMKTTRNPQ. Residues 81–1006 are variable number of tandem repeats (VNTR); that stretch reads ITTLPQSQHT…VSTLVTSTQE (926 aa). 2 stretches are compositionally biased toward low complexity: residues 101-116 and 123-137; these read TTGTTEVTTTLSASSS and TTSQTTLSPDTTTTS. T133 carries an O-linked (GalNAc...) threonine glycan. The span at 142 to 225 shows a compositional bias: polar residues; it reads ESSSPPSTSV…GGMKTTRNPQ (84 aa). A compositionally biased stretch (low complexity) spans 226–273; it reads TTGTTEVTTTLSASSSDHPTSSPESTPGNTAPRTTETSTTTTTKVLMT. Positions 274 to 305 are enriched in polar residues; it reads SLQQKLPTGSTLGTSTQELTTLPQSQHTGIMK. 2 stretches are compositionally biased toward low complexity: residues 306–322 and 335–349; these read TTSRTQTTTPTEVTTRT and TSSQTTLSPDTTTTS. Polar residues predominate over residues 373-436; it reads SGDTGHTMAV…GMKTTRNPQR (64 aa). O-linked (GalNAc...) threonine glycosylation is found at T391 and T392. Residues 437–446 are compositionally biased toward low complexity; it reads TTPTEVTTST. Over residues 447-468 the composition is skewed to polar residues; the sequence is LSASSSDQVQVETTSRATLSPD. Over residues 469-492 the composition is skewed to low complexity; that stretch reads TTTTSHAPSVSSSSPSPPSTEGTS. O-linked (GalNAc...) threonine glycosylation occurs at T470. S479 is a glycosylation site (O-linked (GalNAc...) serine). Over residues 493–509 the composition is skewed to polar residues; sequence VDTGLTTAVTTQDSTPA. Over residues 510-546 the composition is skewed to low complexity; sequence TTQGSLTSSSQTLSTVSPLSTSTQETSTQELTSSQSQ. Polar residues predominate over residues 547–580; the sequence is HTGSMKTTHNPQTTRNTEVTTTLSASSSDQVQVE. The span at 581-594 shows a compositional bias: low complexity; that stretch reads TTSQTTLSDATTTS. Residues 599–682 show a composition bias toward polar residues; sequence ESSSPPSTSD…GGMKTTRNPQ (84 aa). Composition is skewed to low complexity over residues 683 to 698 and 705 to 719; these read TTGTTEVTTTLSASSS and TSSQTTLSPDTTTTS. 2 stretches are compositionally biased toward polar residues: residues 724 to 760 and 773 to 807; these read ESSSPPSTSDMLTTTASTEGTSGDTGHTTAVTTQGSI and QKMSTVSTPTTSSIQELSTLPQSQHTGSMEISSRP. Residues 808 to 828 show a composition bias toward low complexity; it reads QTTSVTSTLSSSPSGSTPVQT. The segment covering 829–868 has biased composition (polar residues); the sequence is RSVTSSSDERTNPTSSGVSNTSPATTEVLTPTSSPESTPG. Over residues 869–915 the composition is skewed to low complexity; that stretch reads NTAPRTTETSTTTTTKVLMTSLQQKLPTGSTLGTSTPTEVTTTLSAS. Positions 916 to 994 are enriched in polar residues; that stretch reads SSDQVQVETT…ISVTPSTQKM (79 aa). Residues 995 to 1015 are compositionally biased toward low complexity; it reads STVSTLVTSTQELTSSQSQRT. The segment covering 1016–1026 has biased composition (polar residues); that stretch reads GSMGTSSKPQA. A compositionally biased stretch (low complexity) spans 1027-1036; that stretch reads TTPTEVTTST. The segment covering 1072–1083 has biased composition (polar residues); that stretch reads VPSLMHSSKPQA. A compositionally biased stretch (low complexity) spans 1084 to 1096; that stretch reads TTPTEVTTSTLSS. The segment covering 1097–1116 has biased composition (polar residues); it reads FSRGSTQTQTVSWETSSSGK. 3 stretches are compositionally biased toward low complexity: residues 1118 to 1130, 1175 to 1188, and 1233 to 1267; these read TAPSTSSRRTPSV, HRQSTQRSSTHSQS, and SGLTTKTDNDRSTALSATSLTLPAPSTSTASRSTV. Residues 1332–1492 enclose the NIDO domain; that stretch reads GHSGVMLISL…TGYTGRCGPT (161 aa). A disordered region spans residues 1574 to 1597; the sequence is GRHRTGLAAGTTSPLSASSTSSGG. Residues 1580 to 1597 are compositionally biased toward low complexity; it reads LAAGTTSPLSASSTSSGG. Positions 1609-1804 constitute a VWFD domain; it reads RPAWTFGDPH…HYGMTSETNG (196 aa). Residues N1644, N1660, N1672, N1689, N1698, N1704, N1715, N1724, N1759, N1780, N1787, N1829, N1874, N1926, N1951, N1974, N1981, N2029, and N2048 are each glycosylated (N-linked (GlcNAc...) asparagine). Positions 2047-2086 constitute an EGF-like 1 domain; that stretch reads QNHSCPVNYCYNHGHCDISGPPDCQPTCTCAPAFTGNRCF. 3 disulfides stabilise this stretch: C2051–C2062, C2056–C2074, and C2076–C2085. N-linked (GlcNAc...) asparagine glycans are attached at residues N2114 and N2121. Residues 2173 to 2193 traverse the membrane as a helical segment; sequence GPLIHYLNNQLISAVMEAFLL. N2227 is a glycosylation site (N-linked (GlcNAc...) asparagine). Residues 2256-2295 form the EGF-like 2 domain; sequence VSPCSEGYCHNGGQCKHLPDGPQCTCATFSIYTSWGERCE. 3 disulfides stabilise this stretch: C2259–C2270, C2264–C2279, and C2281–C2294. A helical membrane pass occupies residues 2301-2321; that stretch reads LGAFFGILFGALGALLLLAIL.

As to quaternary structure, a heterodimeric complex, composed of a mucin-4 alpha chain and a cysteine-rich transmembrane mucin-4 beta chain. Mucin-4 beta chain interacts with ERBB2 via the EGF-like domain 1. In nonpolarized cells, associates with ERBB2 and ERBB3. Post-translationally, proteolytically cleaved into 2 subunits, mucin-4 alpha chain and mucin-4 beta chain. In terms of processing, mucin-4 alpha subunit is highly O-glycosylated. Mucin-4 beta subunit is predominantly N-glycosylated. As to expression, expression is developmentally regulated in the mammary gland, dramatically increases in the lactating gland compared with the virgin mammary gland, while decreasing again during mammary gland involution. Expressed in 13762 ascites cells. Overexpressed in some aggressive mammary tumors. Overexpression seems to block cell-cell and cell-matrix interactions to protect tumor cells from immune surveillance, and to promote metastasis.

It is found in the cell membrane. The protein localises to the secreted. Membrane-bound mucin, a family of highly glycosylated proteins that constitute the major component of the mucus, the slimy and viscous secretion covering epithelial surfaces. These glycoproteins play important roles in the protection of the epithelium and are implicated in epithelial renewal and differentiation. Regulates cellular behavior through both anti-adhesive effects on cell-cell and cell-extracellular matrix interactions and its ability to act as an intramembrane ligand for ERBB2. Plays an important role in proliferation and differentiation of epithelial cells by inducing specific phosphorylation of ERBB2. In polarized epithelial cells, segregates ERBB2 and other ERBB receptors and prevents ERBB2 from acting as a coreceptor. The interaction with ERBB2 leads to enhanced expression of CDKN1B. The formation of a MUC4-ERBB2-ERBB3-NRG1 complex leads to down-regulation of CDKN1B, resulting in repression of apoptosis and stimulation of proliferation. Its ability to promote tumor growth may be mainly due to repression of apoptosis as opposed to proliferation. The sequence is that of Mucin-4 (Muc4) from Rattus norvegicus (Rat).